A 211-amino-acid chain; its full sequence is Phosphoglycerate mutase (211 aa).

Substrate contacts are provided by residues 14–21 (RHGESEWN) and 27–28 (TG). His-15 functions as the Tele-phosphohistidine intermediate in the catalytic mechanism. Position 37 is a phosphothreonine (Thr-37). Position 62 is a phosphoserine (Ser-62). Residues Arg-66, 93–96 (ERYY), Lys-104, 120–121 (RR), and 164–165 (GN) contribute to the substrate site. Glu-93 functions as the Proton donor/acceptor in the catalytic mechanism. Tyr-96 bears the Phosphotyrosine mark. The residue at position 166 (Ser-166) is a Phosphoserine.

Belongs to the phosphoglycerate mutase family. BPG-dependent PGAM subfamily. Monomer. The N-terminus is blocked.

The enzyme catalyses (2R)-2-phosphoglycerate = (2R)-3-phosphoglycerate. It participates in carbohydrate degradation; glycolysis; pyruvate from D-glyceraldehyde 3-phosphate: step 3/5. This Schizosaccharomyces pombe (strain 972 / ATCC 24843) (Fission yeast) protein is Phosphoglycerate mutase (gpm1).